A 157-amino-acid chain; its full sequence is Capsid protein (157 aa).

S2 is modified (N-acetylserine; by host).

This sequence belongs to the virgaviridae capsid protein family.

The protein resides in the virion. Capsid protein self-assembles to form rod-shaped virions about 18 nm in diameter with a central canal enclosing the viral genomic RNA. The chain is Capsid protein (CP) from Brassicaceae (TVCV).